A 130-amino-acid chain; its full sequence is Protein ApaG (130 aa).

Positions 3–127 constitute an ApaG domain; sequence KAETRGISVT…FSLDVPHVRR (125 aa).

The protein is Protein ApaG of Methylobacterium sp. (strain 4-46).